Reading from the N-terminus, the 97-residue chain is uncharacterized protein (97 aa).

This sequence to M.thermoautotrophicum MTH1236.

This is an uncharacterized protein from Methanocaldococcus jannaschii (strain ATCC 43067 / DSM 2661 / JAL-1 / JCM 10045 / NBRC 100440) (Methanococcus jannaschii).